Consider the following 388-residue polypeptide: Salivary protein Tsal2A (388 aa).

A signal peptide spans 1–18; sequence MSLLYGLLILAFTRSCLV. An N-linked (GlcNAc...) asparagine glycan is attached at Asn-260.

Belongs to the DNA/RNA non-specific endonuclease family. It depends on a divalent metal cation as a cofactor. Saliva (at protein level).

It localises to the secreted. In terms of biological role, binds double-stranded DNA (dsDNA) with high affinity. Binds double-stranded RNA. Binds single-stranded DNA with lower affinity and with a preference for purine-rich sequences. Shows residual nuclease activity for dsDNA. Facilitates blood meal intake by lowering the local viscosity created by the release of host DNA. This chain is Salivary protein Tsal2A, found in Glossina morsitans morsitans (Savannah tsetse fly).